The sequence spans 343 residues: Anthranilate phosphoribosyltransferase (343 aa).

5-phospho-alpha-D-ribose 1-diphosphate-binding positions include Gly-77, 80 to 81 (GD), Thr-85, 87 to 90 (NVST), 105 to 113 (KHGNRSSSG), and Ser-117. Gly-77 lines the anthranilate pocket. Ser-89 contacts Mg(2+). Position 108 (Asn-108) interacts with anthranilate. An anthranilate-binding site is contributed by Arg-163. Mg(2+) is bound by residues Asp-222 and Glu-223.

It belongs to the anthranilate phosphoribosyltransferase family. In terms of assembly, homodimer. Mg(2+) is required as a cofactor.

It carries out the reaction N-(5-phospho-beta-D-ribosyl)anthranilate + diphosphate = 5-phospho-alpha-D-ribose 1-diphosphate + anthranilate. The protein operates within amino-acid biosynthesis; L-tryptophan biosynthesis; L-tryptophan from chorismate: step 2/5. Catalyzes the transfer of the phosphoribosyl group of 5-phosphorylribose-1-pyrophosphate (PRPP) to anthranilate to yield N-(5'-phosphoribosyl)-anthranilate (PRA). The sequence is that of Anthranilate phosphoribosyltransferase from Cenarchaeum symbiosum (strain A).